We begin with the raw amino-acid sequence, 123 residues long: Large ribosomal subunit protein bL12 (123 aa).

Belongs to the bacterial ribosomal protein bL12 family. As to quaternary structure, homodimer. Part of the ribosomal stalk of the 50S ribosomal subunit. Forms a multimeric L10(L12)X complex, where L10 forms an elongated spine to which 2 to 4 L12 dimers bind in a sequential fashion. Binds GTP-bound translation factors.

Its function is as follows. Forms part of the ribosomal stalk which helps the ribosome interact with GTP-bound translation factors. Is thus essential for accurate translation. In Roseobacter denitrificans (strain ATCC 33942 / OCh 114) (Erythrobacter sp. (strain OCh 114)), this protein is Large ribosomal subunit protein bL12.